The chain runs to 87 residues: UPF0335 protein RHECIAT_CH0003797 (87 aa).

It belongs to the UPF0335 family.

This Rhizobium etli (strain CIAT 652) protein is UPF0335 protein RHECIAT_CH0003797.